Here is a 93-residue protein sequence, read N- to C-terminus: MPDLMIDHREKAHALLKADADKILRLIEVQIENLTMPQCPVYEDVLDTQMYGLSREIDFAVRLELISEIEGKALLENLEKKLNILHEASQNTL.

It belongs to the UPF0358 family.

The protein is UPF0358 protein OB1428 of Oceanobacillus iheyensis (strain DSM 14371 / CIP 107618 / JCM 11309 / KCTC 3954 / HTE831).